The following is a 413-amino-acid chain: GDP-mannose-dependent alpha-mannosyltransferase (413 aa).

It belongs to the glycosyltransferase group 1 family.

It participates in phospholipid metabolism; phosphatidylinositol metabolism. Catalyzes the addition of a mannose residue from GDP-D-mannose to GlcAGroAc2 to generate 1,2-di-O-C16/C18:1-(alpha-D-mannopyranosyl)-(1-4)-(alpha-D-glucopyranosyluronic acid)-(1-3)-glycerol(ManGlcAGroAc2). This is GDP-mannose-dependent alpha-mannosyltransferase (mgtA) from Corynebacterium glutamicum (strain ATCC 13032 / DSM 20300 / JCM 1318 / BCRC 11384 / CCUG 27702 / LMG 3730 / NBRC 12168 / NCIMB 10025 / NRRL B-2784 / 534).